The chain runs to 121 residues: Small ribosomal subunit protein bS16m (121 aa).

Belongs to the bacterial ribosomal protein bS16 family. Component of the mitochondrial small ribosomal subunit (mt-SSU). Mature yeast 74S mitochondrial ribosomes consist of a small (37S) and a large (54S) subunit. The 37S small subunit contains a 15S ribosomal RNA (15S mt-rRNA) and 34 different proteins. The 54S large subunit contains a 21S rRNA (21S mt-rRNA) and 46 different proteins.

The protein localises to the mitochondrion. Functionally, component of the mitochondrial ribosome (mitoribosome), a dedicated translation machinery responsible for the synthesis of mitochondrial genome-encoded proteins, including at least some of the essential transmembrane subunits of the mitochondrial respiratory chain. The mitoribosomes are attached to the mitochondrial inner membrane and translation products are cotranslationally integrated into the membrane. The chain is Small ribosomal subunit protein bS16m (MRPS16) from Saccharomyces cerevisiae (strain ATCC 204508 / S288c) (Baker's yeast).